The primary structure comprises 920 residues: Disintegrin and metalloproteinase domain-containing protein 19 (920 aa).

The N-terminal stretch at 1-26 is a signal peptide; sequence MPGRAGVARFCLLALALQLHWPLAAC. Positions 27–204 are excised as a propeptide; the sequence is EPGWTTRGSQ…TKKQPRRMKR (178 aa). The Extracellular portion of the chain corresponds to 27–703; that stretch reads EPGWTTRGSQ…VDSGPLPPKS (677 aa). Positions 131 to 138 match the Cysteine switch motif; that stretch reads STCRGIRG. C133 contributes to the Zn(2+) binding site. N145 carries N-linked (GlcNAc...) asparagine glycosylation. Residues 211–409 form the Peptidase M12B domain; that stretch reads KYVELYLVAD…GGGMCLSNMP (199 aa). Intrachain disulfides connect C321-C404, C361-C388, and C362-C371. Position 346 (H346) interacts with Zn(2+). The active site involves E347. Residues H350 and H356 each coordinate Zn(2+). The 87-residue stretch at 417–503 folds into the Disintegrin domain; the sequence is GRRCGNGYLE…HCPTNYYQMD (87 aa). N-linked (GlcNAc...) asparagine glycans are attached at residues N445 and N448. C475 and C495 are disulfide-bonded. N649 is a glycosylation site (N-linked (GlcNAc...) asparagine). One can recognise an EGF-like domain in the interval 654–686; it reads ETEGCGKKCNGHGVCNNNKNCHCFPGWSPPFCN. Intrachain disulfides connect C658–C668, C662–C674, and C676–C685. A helical membrane pass occupies residues 704 to 724; sequence VGPVIAGVFSALFVLAVLVLL. At 725–920 the chain is on the cytoplasmic side; the sequence is CHCYRQSHKL…RVGAIISSKI (196 aa). Positions 755–920 are disordered; that stretch reads SQSGGTGHAN…RVGAIISSKI (166 aa). Residues 767–783 show a composition bias toward polar residues; that stretch reads FKLQTPQGKRKVTNTPE. The span at 825-834 shows a compositional bias: basic and acidic residues; the sequence is ARIERKESAR. The SH3-binding motif lies at 835-846; sequence RPPPSRPMPPAP. 2 stretches are compositionally biased toward pro residues: residues 835-846 and 888-903; these read RPPPSRPMPPAP and TSGP…PVPK.

Interacts with SH3PXD2A. It depends on Zn(2+) as a cofactor. In terms of processing, the precursor is cleaved by a furin endopeptidase. As to expression, widely expressed, with the highest expression in bone, heart and lung, followed by brain and spleen and relatively low expression in liver, skeletal muscle, kidney and testis. In bone, primarily expressed in cell of the osteoblast lineage and not detected in mature osteoclasts.

Its subcellular location is the membrane. In terms of biological role, participates in the proteolytic processing of beta-type neuregulin isoforms which are involved in neurogenesis and synaptogenesis, suggesting a regulatory role in glial cell. Also cleaves alpha-2 macroglobulin. May be involved in osteoblast differentiation and/or osteoblast activity in bone. The polypeptide is Disintegrin and metalloproteinase domain-containing protein 19 (Adam19) (Mus musculus (Mouse)).